Here is a 427-residue protein sequence, read N- to C-terminus: Glutamate-1-semialdehyde 2,1-aminomutase (427 aa).

Lysine 265 is subject to N6-(pyridoxal phosphate)lysine.

The protein belongs to the class-III pyridoxal-phosphate-dependent aminotransferase family. HemL subfamily. In terms of assembly, homodimer. The cofactor is pyridoxal 5'-phosphate.

It is found in the cytoplasm. The enzyme catalyses (S)-4-amino-5-oxopentanoate = 5-aminolevulinate. Its pathway is porphyrin-containing compound metabolism; protoporphyrin-IX biosynthesis; 5-aminolevulinate from L-glutamyl-tRNA(Glu): step 2/2. The sequence is that of Glutamate-1-semialdehyde 2,1-aminomutase from Neisseria meningitidis serogroup B (strain ATCC BAA-335 / MC58).